Here is a 288-residue protein sequence, read N- to C-terminus: ATP synthase gamma chain (288 aa).

Belongs to the ATPase gamma chain family. In terms of assembly, F-type ATPases have 2 components, CF(1) - the catalytic core - and CF(0) - the membrane proton channel. CF(1) has five subunits: alpha(3), beta(3), gamma(1), delta(1), epsilon(1). CF(0) has three main subunits: a, b and c.

Its subcellular location is the cell inner membrane. In terms of biological role, produces ATP from ADP in the presence of a proton gradient across the membrane. The gamma chain is believed to be important in regulating ATPase activity and the flow of protons through the CF(0) complex. This is ATP synthase gamma chain from Blochmanniella floridana.